A 141-amino-acid chain; its full sequence is Hemoglobin subunit alpha-1/2 (141 aa).

Positions 1–141 constitute a Globin domain; sequence VLSPADKTNV…VSTVLTSKYR (141 aa). At serine 3 the chain carries Phosphoserine. Lysine 7 carries the post-translational modification N6-succinyllysine. Threonine 8 carries the post-translational modification Phosphothreonine. Position 11 is an N6-succinyllysine (lysine 11). Lysine 16 is modified (N6-acetyllysine; alternate). The residue at position 16 (lysine 16) is an N6-succinyllysine; alternate. Position 24 is a phosphotyrosine (tyrosine 24). Serine 35 bears the Phosphoserine mark. Lysine 40 is subject to N6-succinyllysine. Serine 49 carries the post-translational modification Phosphoserine. Histidine 58 lines the O2 pocket. Residue histidine 87 participates in heme b binding. Serine 102 is modified (phosphoserine). Threonine 108 carries the phosphothreonine modification. Serine 124 carries the phosphoserine modification. 2 positions are modified to phosphothreonine: threonine 134 and threonine 137. Residue serine 138 is modified to Phosphoserine.

This sequence belongs to the globin family. Heterotetramer of two alpha chains and two beta chains. In terms of tissue distribution, red blood cells.

Functionally, involved in oxygen transport from the lung to the various peripheral tissues. In Mustela putorius (European polecat), this protein is Hemoglobin subunit alpha-1/2.